Reading from the N-terminus, the 230-residue chain is tRNA (guanine-N(7)-)-methyltransferase (230 aa).

The S-adenosyl-L-methionine site is built by E61, E86, N113, and D136. D136 is an active-site residue. Residues K140, D172, and 208 to 211 each bind substrate; that span reads TKYE.

Belongs to the class I-like SAM-binding methyltransferase superfamily. TrmB family.

It catalyses the reaction guanosine(46) in tRNA + S-adenosyl-L-methionine = N(7)-methylguanosine(46) in tRNA + S-adenosyl-L-homocysteine. The protein operates within tRNA modification; N(7)-methylguanine-tRNA biosynthesis. Catalyzes the formation of N(7)-methylguanine at position 46 (m7G46) in tRNA. This is tRNA (guanine-N(7)-)-methyltransferase from Mycobacterium leprae (strain Br4923).